A 160-amino-acid chain; its full sequence is Putative NrdI-like protein (160 aa).

It belongs to the NrdI family.

This Streptococcus pyogenes serotype M6 (strain ATCC BAA-946 / MGAS10394) protein is Putative NrdI-like protein.